Reading from the N-terminus, the 144-residue chain is Probable calcium-binding protein CML31 (144 aa).

EF-hand domains follow at residues 1 to 31 (MAEI…FSPQ), 32 to 67 (ITSE…NGGG), 72 to 107 (EEEV…LGEK), and 108 to 143 (HTME…NKES). Positions 45, 47, 49, 51, 56, 85, 87, 89, 91, 96, 121, 123, 125, and 132 each coordinate Ca(2+).

Potential calcium sensor. The polypeptide is Probable calcium-binding protein CML31 (CML31) (Arabidopsis thaliana (Mouse-ear cress)).